A 2214-amino-acid chain; its full sequence is Non-reducing polyketide synthase dpmpA (2214 aa).

The tract at residues 75 to 178 is N-terminal acylcarrier protein transacylase domain (SAT); sequence EWIRTGDSHV…LAVCAGAWKD (104 aa). A Ketosynthase family 3 (KS3) domain is found at 372 to 784; it reads DESIAIVGAS…GNNTAMIVCQ (413 aa). Catalysis depends on for beta-ketoacyl synthase activity residues cysteine 532, histidine 667, and histidine 707. Positions 888 to 1184 are malonyl-CoA:ACP transacylase (MAT) domain; sequence VFAGQTGHRP…AFLSARLGSP (297 aa). Serine 974 functions as the For acyl/malonyl transferase activity in the catalytic mechanism. Residues 1255–1389 are N-terminal hotdog fold; that stretch reads PQLVSVVRSS…GIIKSQEQDR (135 aa). Residues 1255–1566 form the PKS/mFAS DH domain; the sequence is PQLVSVVRSS…FSKVPVRSLQ (312 aa). Residues 1265–1560 form a product template (PT) domain region; it reads GGADPEAAEF…AILGARFSKV (296 aa). The tract at residues 1416 to 1566 is C-terminal hotdog fold; the sequence is GASVVQGAFV…FSKVPVRSLQ (151 aa). Carrier domains follow at residues 1620-1695 and 1722-1802; these read NEVK…HSRL and KAST…SGAD. Serine 1654 carries the post-translational modification O-(pantetheine 4'-phosphoryl)serine. The disordered stretch occupies residues 1698-1728; the sequence is VPQLSPHDTDRSSDLSAGQPPSTPKASTQEQ. Residues 1711-1726 are compositionally biased toward polar residues; it reads DLSAGQPPSTPKASTQ. Serine 1762 bears the O-(pantetheine 4'-phosphoryl)serine mark. Residues 1805 to 1827 are disordered; it reads GFPRTSDNRRSEEGSVGHVGPEK. A compositionally biased stretch (basic and acidic residues) spans 1810-1827; the sequence is SDNRRSEEGSVGHVGPEK. The tract at residues 1958–2210 is methyltransferase (CMeT) domain; sequence FPAYRPDHRL…SREADLFRWI (253 aa).

Its pathway is secondary metabolite biosynthesis; terpenoid biosynthesis. Functionally, non-reducing polyketide synthase; part of the gene cluster that mediates the biosynthesis of diterpenoid pyrones. The first step of the pathway is the synthesis of the alpha-pyrone moiety by the polyketide synthase dpmpA via condensation of one acetyl-CoA starter unit with 3 malonyl-CoA units and 2 methylations. The alpha-pyrone is then combined with geranylgeranyl pyrophosphate (GGPP) formed by the GGPP synthase dpmpD through the action of the prenyltransferase dpmpC to yield a linear alpha-pyrone diterpenoid. Subsequent steps in the diterpenoid pyrone biosynthetic pathway involve the decalin core formation, which is initiated by the epoxidation of the C10-C11 olefin by the FAD-dependent oxidoreductase dpmpE, and is followed by a cyclization cascade catalyzed by the terpene cyclase dpmpB. The short chain dehydrogenase/reductase dpmpG then oxidizes the 8S hydroxy group to a ketone and the short chain dehydrogenase/reductase dpmpH reduces the ketone to the 8R hydroxy group to yield higginsianin B. Higginsianin B is further methylated by the methyltransferase dpmpI to produce the intermediate named FDDP B. The cytochrome P450 monooxygenase dpmpJ then oxidizes the C-26 methyl to primary alcohol, producing the final diterpenoid pyrone with a C-26 primary alcohol on the gamma-pyrone moiety named FDDP C. This chain is Non-reducing polyketide synthase dpmpA, found in Macrophomina phaseolina (strain MS6) (Charcoal rot fungus).